The following is a 484-amino-acid chain: Chromosomal replication initiator protein DnaA (484 aa).

The domain I, interacts with DnaA modulators stretch occupies residues 1–83 (MQPPSQDWAS…LAWRTVWPGI (83 aa)). Residues 83-146 (IAEVKVSVRN…EKKAEGEDQN (64 aa)) are domain II. The interval 110-146 (GDQPRPLPKKPAKKKQSVPATPKSTSPEKKAEGEDQN) is disordered. Over residues 116-125 (LPKKPAKKKQ) the composition is skewed to basic residues. The span at 135-146 (SPEKKAEGEDQN) shows a compositional bias: basic and acidic residues. The interval 147 to 364 (QFEERYNFDN…GALNRVVAYA (218 aa)) is domain III, AAA+ region. Residues G191, G193, K194, and T195 each coordinate ATP. Residues 365 to 484 (TLSNRPINMD…VRLLMRQFEG (120 aa)) are domain IV, binds dsDNA.

It belongs to the DnaA family. Oligomerizes as a right-handed, spiral filament on DNA at oriC.

The protein resides in the cytoplasm. Plays an essential role in the initiation and regulation of chromosomal replication. ATP-DnaA binds to the origin of replication (oriC) to initiate formation of the DNA replication initiation complex once per cell cycle. Binds the DnaA box (a 9 base pair repeat at the origin) and separates the double-stranded (ds)DNA. Forms a right-handed helical filament on oriC DNA; dsDNA binds to the exterior of the filament while single-stranded (ss)DNA is stabiized in the filament's interior. The ATP-DnaA-oriC complex binds and stabilizes one strand of the AT-rich DNA unwinding element (DUE), permitting loading of DNA polymerase. After initiation quickly degrades to an ADP-DnaA complex that is not apt for DNA replication. Binds acidic phospholipids. This chain is Chromosomal replication initiator protein DnaA, found in Zymomonas mobilis subsp. mobilis (strain ATCC 31821 / ZM4 / CP4).